The following is a 206-amino-acid chain: Flavin prenyltransferase UbiX (206 aa).

FMN is bound by residues 11–13, serine 37, 103–106, and arginine 138; these read GAS and SMST. Residues tyrosine 168 and arginine 184 each coordinate dimethylallyl phosphate.

The protein belongs to the UbiX/PAD1 family.

It catalyses the reaction dimethylallyl phosphate + FMNH2 = prenylated FMNH2 + phosphate. Flavin prenyltransferase that catalyzes the synthesis of the prenylated FMN cofactor (prenyl-FMN) for 4-hydroxy-3-polyprenylbenzoic acid decarboxylase UbiD. The prenyltransferase is metal-independent and links a dimethylallyl moiety from dimethylallyl monophosphate (DMAP) to the flavin N5 and C6 atoms of FMN. The chain is Flavin prenyltransferase UbiX from Synechocystis sp. (strain ATCC 27184 / PCC 6803 / Kazusa).